We begin with the raw amino-acid sequence, 1052 residues long: uncharacterized protein (1052 aa).

It belongs to the IIV-6 050L family.

This is an uncharacterized protein from Invertebrate iridescent virus 6 (IIV-6).